The chain runs to 456 residues: Probable glycine dehydrogenase (decarboxylating) subunit 1 (456 aa).

Belongs to the GcvP family. N-terminal subunit subfamily. The glycine cleavage system is composed of four proteins: P, T, L and H. In this organism, the P 'protein' is a heterodimer of two subunits.

The enzyme catalyses N(6)-[(R)-lipoyl]-L-lysyl-[glycine-cleavage complex H protein] + glycine + H(+) = N(6)-[(R)-S(8)-aminomethyldihydrolipoyl]-L-lysyl-[glycine-cleavage complex H protein] + CO2. Functionally, the glycine cleavage system catalyzes the degradation of glycine. The P protein binds the alpha-amino group of glycine through its pyridoxal phosphate cofactor; CO(2) is released and the remaining methylamine moiety is then transferred to the lipoamide cofactor of the H protein. This is Probable glycine dehydrogenase (decarboxylating) subunit 1 from Legionella pneumophila subsp. pneumophila (strain Philadelphia 1 / ATCC 33152 / DSM 7513).